The primary structure comprises 134 residues: Lymphocyte antigen 6A-2/6E-1 (134 aa).

The N-terminal stretch at 1–26 (MDTSHTTKSCLLILLVALLCAERAQG) is a signal peptide. The UPAR/Ly6 domain occupies 27-119 (LECYQCYGVP…NGGSTWTMAG (93 aa)). Intrachain disulfides connect cysteine 29–cysteine 53, cysteine 32–cysteine 41, cysteine 46–cysteine 74, cysteine 78–cysteine 98, and cysteine 99–cysteine 104. Glycine 112 is lipidated: GPI-anchor amidated glycine. The propeptide at 113–134 (STWTMAGVLLFSLSSVLLQTLL) is removed in mature form.

Post-translationally, O-glycosylated. Not N-glycosylated. In terms of processing, not phosphorylated. In terms of tissue distribution, widely expressed.

The protein localises to the cell membrane. T-cell activation. This Mus musculus (Mouse) protein is Lymphocyte antigen 6A-2/6E-1 (Ly6a).